The following is a 173-amino-acid chain: Alpha-crystallin A chain (173 aa).

N-acetylmethionine is present on M1. The segment at 1–63 is required for complex formation with BFSP1 and BFSP2; it reads MDIAIQQPWF…RTVLDSGVSE (63 aa). Residue Q6 is modified to Deamidated glutamine; partial. Phosphoserine is present on S45. Residue Q50 is modified to Deamidated glutamine; partial. The 111-residue stretch at 52-162 folds into the sHSP domain; it reads LFRTVLDSGV…GHSERAIPVS (111 aa). 2 positions are modified to N6-acetyllysine: K70 and K99. Residue H100 coordinates Zn(2+). A Deamidated asparagine; partial modification is found at N101. E102 and H107 together coordinate Zn(2+). Phosphoserine is present on S122. Residue N123 is modified to Deamidated asparagine; partial. The disordered stretch occupies residues 144 to 173; sequence PKVPSGVDAGHSERAIPVSREEKPSSAPSS. Residues 153–167 show a composition bias toward basic and acidic residues; sequence GHSERAIPVSREEKP. H154 lines the Zn(2+) pocket. An O-linked (GlcNAc) serine glycan is attached at S162.

The protein belongs to the small heat shock protein (HSP20) family. In terms of assembly, heteromer composed of three CRYAA and one CRYAB subunits. Inter-subunit bridging via zinc ions enhances stability, which is crucial as there is no protein turn over in the lens. Can also form homodimers and homotetramers (dimers of dimers) which serve as the building blocks of homooligomers. Within homooligomers, the zinc-binding motif is created from residues of 3 different molecules. His-100 and Glu-102 from one molecule are ligands of the zinc ion, and His-107 and His-154 residues from additional molecules complete the site with tetrahedral coordination geometry. Part of a complex required for lens intermediate filament formation composed of BFSP1, BFSP2 and CRYAA. Acetylation at Lys-70 may increase chaperone activity. Post-translationally, undergoes age-dependent proteolytical cleavage at the C-terminus.

The protein localises to the cytoplasm. The protein resides in the nucleus. In terms of biological role, contributes to the transparency and refractive index of the lens. Acts as a chaperone, preventing aggregation of various proteins under a wide range of stress conditions. Required for the correct formation of lens intermediate filaments as part of a complex composed of BFSP1, BFSP2 and CRYAA. In Neovison vison (American mink), this protein is Alpha-crystallin A chain (CRYAA).